The chain runs to 94 residues: Bacterial microcompartment shell protein PduA (94 aa).

The BMC domain maps to 5–89; the sequence is ALGMVETKGL…PHTDVEKILP (85 aa).

It belongs to the bacterial microcompartments protein family. Homohexamer with a central pore of about 5.6 Angstroms in diameter. The hexamers pack against each other in arrays. Interacts with the N-terminus of PduP which targets PduP to the BMC. Modeling suggests PduC, PduD, PduE, PduL and PduP interact with a cleft formed by the C-terminal segments of 2 adjacent PduA subunits (on the BMC luminal side) in the hexamer.

The protein resides in the bacterial microcompartment. It functions in the pathway polyol metabolism; 1,2-propanediol degradation. In terms of biological role, one of the major shell proteins of the bacterial microcompartment (BMC) dedicated to 1,2-propanediol (1,2-PD) degradation. At least one of PduA or PduJ is required for BMC assembly; it must be encoded as the first gene in the pdu operon. Not required for structural integrity of BMCs, it is required to mitigate propionaldehyde toxicity. Controls diffusion of 1,2-PD into and propionaldehyde out of the BMC shell; residue 40 is particularly important for pore permeability. Overexpression of this protein leads to aberrant filaments that extend the length of the cell, cross the cleavage furrow and impair division. The filaments form nanotubes with a hollow center. The isolated BMC shell component protein ratio for J:A:B':B:K:T:U is approximately 15:10:7:6:1:1:2. Edge residues (particularly Lys-26) are important for function and assembly of the BMC, and influence array formation by hexamers. Interaction with PduA allows encapsulation of at least PduP in BMCs. Probably also targets PduD to the BMC. PduA is probably the hub for binding multiple enzymes to the interior of the BMC; modeling suggests PduC, PduD, PduE, PduG, PduL and PduP are targeted to PduA. The 1,2-PD-specific bacterial microcompartment (BMC) concentrates low levels of 1,2-PD catabolic enzymes, concentrates volatile reaction intermediates thus enhancing pathway flux and keeps the level of toxic, mutagenic propionaldehyde low. The chain is Bacterial microcompartment shell protein PduA from Salmonella typhimurium (strain LT2 / SGSC1412 / ATCC 700720).